A 437-amino-acid chain; its full sequence is Proline--tRNA ligase (437 aa).

Belongs to the class-II aminoacyl-tRNA synthetase family. ProS type 2 subfamily. Homodimer.

The protein localises to the cytoplasm. It catalyses the reaction tRNA(Pro) + L-proline + ATP = L-prolyl-tRNA(Pro) + AMP + diphosphate. In terms of biological role, catalyzes the attachment of proline to tRNA(Pro) in a two-step reaction: proline is first activated by ATP to form Pro-AMP and then transferred to the acceptor end of tRNA(Pro). The sequence is that of Proline--tRNA ligase from Rhizorhabdus wittichii (strain DSM 6014 / CCUG 31198 / JCM 15750 / NBRC 105917 / EY 4224 / RW1) (Sphingomonas wittichii).